A 177-amino-acid chain; its full sequence is Bifunctional protein PyrR (177 aa).

Residues 99–111 (VILIDDVLYTGRT) carry the PRPP-binding motif.

It belongs to the purine/pyrimidine phosphoribosyltransferase family. PyrR subfamily. In terms of assembly, homodimer and homohexamer; in equilibrium.

The enzyme catalyses UMP + diphosphate = 5-phospho-alpha-D-ribose 1-diphosphate + uracil. Regulates transcriptional attenuation of the pyrimidine nucleotide (pyr) operon by binding in a uridine-dependent manner to specific sites on pyr mRNA. This disrupts an antiterminator hairpin in the RNA and favors formation of a downstream transcription terminator, leading to a reduced expression of downstream genes. Functionally, also displays a weak uracil phosphoribosyltransferase activity which is not physiologically significant. The chain is Bifunctional protein PyrR from Pediococcus pentosaceus (strain ATCC 25745 / CCUG 21536 / LMG 10740 / 183-1w).